Reading from the N-terminus, the 588-residue chain is Disabled homolog 1 (588 aa).

Positions 1-26 (MSTETELQVAVKTSAKKDSRKKGQDR) are disordered. Over residues 15–26 (AKKDSRKKGQDR) the composition is skewed to basic and acidic residues. In terms of domain architecture, PID spans 36 to 189 (KGEGVRYKAK…CEQAVYQTIL (154 aa)). 3 positions are modified to phosphotyrosine: Tyr198, Tyr220, and Tyr232. Disordered stretches follow at residues 417-443 (LTPL…RQKM), 451-470 (FQMA…PSLT), and 502-588 (LTPV…QAGS). The segment covering 424–436 (PGTSDSTRSSPQT) has biased composition (polar residues). Low complexity-rich tracts occupy residues 503–512 (TPVTSTTPST) and 520–534 (PRQS…SHAS). Position 524 is a phosphoserine; by CDK5 (Ser524). Positions 537-546 (TTDDIFEEGF) are enriched in acidic residues.

Associates with the SH2 domains of SRC, FYN and ABL. Interacts (phosphorylated on tyrosine residues) with CRK and CRKL (via respective SH2 domain). Interacts with SIAH1, LRP8 and VLDLR. Interacts with LRP1. Interacts with APLP1 (via NPXY motif). Interacts with DAB2IP. Interacts with ZSWIM8. Phosphorylated by FYN on Tyr-198 and Tyr-220 upon reelin induction in embryonic neurons. Also phosphorylated on Ser-524 independently of reelin signaling. In terms of processing, ubiquitinated by various cullin-5-RING E3 ubiquitin-protein ligase complexes (ECS complexes) following ligand-binding and phosphorylation, leading to its degradation. Ubiquitinated by the ECS(SOCS7) complex in the cortical plate of the developing cerebral cortex following ligand-binding and phosphorylation by FYN, leading to its degradation by the proteasome. Recognized by ZSWIM8 through a disorder targets misorder mechanism that eliminates misfolded DAB1 via ubiquitination and proteasomal degradation. Mainly expressed in brain.

It localises to the cytoplasm. Its function is as follows. Signaling adapter of the reelin-mediated signaling pathway, which regulates the migration and differentiation of postmitotic neurons during brain development. Mediates intracellular transduction of Reelin signaling following reelin (RELN)-binding to its receptor: acts by docking proteins through its phosphotyrosine residues and PID domain. The protein is Disabled homolog 1 (DAB1) of Homo sapiens (Human).